Consider the following 566-residue polypeptide: E3 ubiquitin-protein ligase Rnf220 (566 aa).

Residue Lys-277 forms a Glycyl lysine isopeptide (Lys-Gly) (interchain with G-Cter in SUMO2) linkage. The interval 277–300 (KREGDSPTASPHSSATEDLHHSDR) is disordered. Basic and acidic residues predominate over residues 291–300 (ATEDLHHSDR). Residue Ser-390 is modified to Phosphoserine. A coiled-coil region spans residues 485–513 (EESAVTTFEALKARVRELERQLSRGDRYK). The segment at 514–522 (CLICMDSYS) is required for targeting to the cytoplasm. Residues 514–553 (CLICMDSYSMPLTSIQCWHVHCEECWLRTLGAKKLCPQCN) form an RING-type zinc finger.

As to quaternary structure, interacts with SIN3B. Interacts with CTNNB1 (via Armadillo repeats 2-8). Interacts with USP7 (via MATH domain). In terms of processing, auto-ubiquitinated; leads to proteasomal degradation. In terms of tissue distribution, in the brain, expressed in the hippocampus, telenecephalon and cerebellum. No expression in astro glial cells or in neural progenitor cells.

It is found in the cytoplasm. The protein resides in the nucleus. The catalysed reaction is S-ubiquitinyl-[E2 ubiquitin-conjugating enzyme]-L-cysteine + [acceptor protein]-L-lysine = [E2 ubiquitin-conjugating enzyme]-L-cysteine + N(6)-ubiquitinyl-[acceptor protein]-L-lysine.. It participates in protein modification; protein ubiquitination. In terms of biological role, E3 ubiquitin-protein ligase that promotes the ubiquitination and proteasomal degradation of SIN3B. Independently of its E3 ligase activity, acts as a CTNNB1 stabilizer through USP7-mediated deubiquitination of CTNNB1 and promotes Wnt signaling. Plays a critical role in the regulation of nuclear lamina. The chain is E3 ubiquitin-protein ligase Rnf220 (Rnf220) from Mus musculus (Mouse).